We begin with the raw amino-acid sequence, 422 residues long: DLRANDLKRSQEIVESKSQRLDAGILDLEKRKFLVDQKEEYLIKLLEDVSGLTKYQAKELLIKQIKNKSEKELISILKNAELQAHSKAKIISNNILILAMERIKVELTSQRTTNIVKLPSDDLKGRIIGKDGRNMKTFEQIGGVDIVVDETPNVVVVSSFNPIRREIATRTLEQLIIDGRIQPVKIENELKKQEQELEYIIQETGLNTIKELNINDIDIELVKLIGKLKFRTSYGQNVLAHSIEVAKLSGAIASELGLDVEKAIRAGLLHDIGKAIDFEKQGSHVVLGAEIARKYNEDPIIINSIESHHEDKEKSSEIAAIVAIADSISASRPGARYNAIDEFILRMHEIEKIGNSIPGVAKTYALQSGRQIRLIVDPLVASDLDLALILEKMKEQIKNKVIIPGEITITVIREKKETDILK.

The region spanning 112 to 172 (TTNIVKLPSD…IRREIATRTL (61 aa)) is the KH domain. Residues 238–331 (VLAHSIEVAK…VAIADSISAS (94 aa)) enclose the HD domain.

This sequence belongs to the RNase Y family.

In terms of biological role, endoribonuclease that initiates mRNA decay. This Mycoplasma mycoides protein is Ribonuclease Y.